A 78-amino-acid polypeptide reads, in one-letter code: Large ribosomal subunit protein uL23 (78 aa).

Belongs to the universal ribosomal protein uL23 family. Part of the 50S ribosomal subunit. Contacts protein L29.

Functionally, binds to 23S rRNA. One of the proteins that surrounds the polypeptide exit tunnel on the outside of the ribosome. The polypeptide is Large ribosomal subunit protein uL23 (Nanoarchaeum equitans (strain Kin4-M)).